The sequence spans 113 residues: Large ribosomal subunit protein P2 (113 aa).

Positions 60–113 are disordered; the sequence is SKVSSLSAGAGPSGGAAAAGADAGAAEAEKEEEPQEEEADVNMGDIFGGDDEDY. Low complexity predominate over residues 74 to 85; sequence GAAAAGADAGAA. Residues 88-99 show a composition bias toward acidic residues; sequence EKEEEPQEEEAD.

The protein belongs to the eukaryotic ribosomal protein P1/P2 family. In terms of assembly, P1 and P2 exist as dimers at the large ribosomal subunit. Phosphorylated.

Its function is as follows. Plays an important role in the elongation step of protein synthesis. This Euplotes raikovi protein is Large ribosomal subunit protein P2.